Reading from the N-terminus, the 271-residue chain is Acetyl-coenzyme A carboxylase carboxyl transferase subunit beta (271 aa).

Residues 21 to 271 (LWIQCPYCKQ…LGDLLALHTA (251 aa)) enclose the CoA carboxyltransferase N-terminal domain. Zn(2+) is bound by residues C25, C28, C43, and C46. The C4-type zinc-finger motif lies at 25-46 (CPYCKQGSYRESLGNAQVCPHC).

Belongs to the AccD/PCCB family. Acetyl-CoA carboxylase is a heterohexamer composed of biotin carboxyl carrier protein (AccB), biotin carboxylase (AccC) and two subunits each of ACCase subunit alpha (AccA) and ACCase subunit beta (AccD). Zn(2+) serves as cofactor.

Its subcellular location is the cytoplasm. The enzyme catalyses N(6)-carboxybiotinyl-L-lysyl-[protein] + acetyl-CoA = N(6)-biotinyl-L-lysyl-[protein] + malonyl-CoA. The protein operates within lipid metabolism; malonyl-CoA biosynthesis; malonyl-CoA from acetyl-CoA: step 1/1. In terms of biological role, component of the acetyl coenzyme A carboxylase (ACC) complex. Biotin carboxylase (BC) catalyzes the carboxylation of biotin on its carrier protein (BCCP) and then the CO(2) group is transferred by the transcarboxylase to acetyl-CoA to form malonyl-CoA. This chain is Acetyl-coenzyme A carboxylase carboxyl transferase subunit beta, found in Lacticaseibacillus paracasei (strain ATCC 334 / BCRC 17002 / CCUG 31169 / CIP 107868 / KCTC 3260 / NRRL B-441) (Lactobacillus paracasei).